Consider the following 484-residue polypeptide: Sushi domain-containing protein 4 (484 aa).

Residues methionine 1–valine 35 form the signal peptide. Sushi domains lie at glutamine 46–serine 110, glutamate 111–cysteine 168, glutamine 169–aspartate 230, and glutamate 232–lysine 295. 8 cysteine pairs are disulfide-bonded: cysteine 48-cysteine 90, cysteine 76-cysteine 108, cysteine 113-cysteine 156, cysteine 138-cysteine 168, cysteine 171-cysteine 215, cysteine 201-cysteine 228, cysteine 234-cysteine 280, and cysteine 265-cysteine 293. N-linked (GlcNAc...) asparagine glycans are attached at residues asparagine 95 and asparagine 125. A glycan (N-linked (GlcNAc...) asparagine) is linked at asparagine 183. Residues tryptophan 311–alanine 331 form a helical membrane-spanning segment. The disordered stretch occupies residues serine 374–cysteine 484. Polar residues-rich tracts occupy residues aspartate 424–histidine 442 and serine 449–serine 467. Acidic residues predominate over residues isoleucine 470 to cysteine 484.

Its subcellular location is the membrane. This is Sushi domain-containing protein 4 (susd4) from Danio rerio (Zebrafish).